Reading from the N-terminus, the 910-residue chain is Ubiquitin carboxyl-terminal hydrolase 9 (910 aa).

Residues Thr19 to Ile134 form the DUSP domain. The tract at residues Ile68–Ser89 is disordered. One can recognise a USP domain in the interval Ala303–Val894. Cys312 acts as the Nucleophile in catalysis. His852 acts as the Proton acceptor in catalysis.

This sequence belongs to the peptidase C19 family.

The enzyme catalyses Thiol-dependent hydrolysis of ester, thioester, amide, peptide and isopeptide bonds formed by the C-terminal Gly of ubiquitin (a 76-residue protein attached to proteins as an intracellular targeting signal).. In terms of biological role, recognizes and hydrolyzes the peptide bond at the C-terminal Gly of ubiquitin. Involved in the processing of poly-ubiquitin precursors as well as that of ubiquitinated proteins. This is Ubiquitin carboxyl-terminal hydrolase 9 (UBP9) from Arabidopsis thaliana (Mouse-ear cress).